The primary structure comprises 377 residues: DNA replication and repair protein RecF (377 aa).

30 to 37 (GNNGSGKS) is an ATP binding site.

This sequence belongs to the RecF family.

The protein resides in the cytoplasm. In terms of biological role, the RecF protein is involved in DNA metabolism; it is required for DNA replication and normal SOS inducibility. RecF binds preferentially to single-stranded, linear DNA. It also seems to bind ATP. This Colwellia psychrerythraea (strain 34H / ATCC BAA-681) (Vibrio psychroerythus) protein is DNA replication and repair protein RecF.